Reading from the N-terminus, the 329-residue chain is Ephrin-B1 (329 aa).

Positions 1 to 20 (MEGLRRLLGLLLVLYRLCSA) are cleaved as a signal peptide. Residues 21–226 (LGKNLEPVTW…FFNSKIAVFA (206 aa)) are Extracellular-facing. An Ephrin RBD domain is found at 23-157 (KNLEPVTWNS…TRSMKIIMKV (135 aa)). 2 disulfide bridges follow: C57–C94 and C82–C146. The N-linked (GlcNAc...) asparagine glycan is linked to N132. The tract at residues 163 to 192 (AVPPEQLTTTRPSKEADNTGKIATFGPWNG) is disordered. Residue N203 is glycosylated (N-linked (GlcNAc...) asparagine). The helical transmembrane segment at 227–247 (AIGAGCVIFILIIIFLVVLLI) threads the bilayer. At 248–329 (KIRKRHRKHT…QSPANIYYKV (82 aa)) the chain is on the cytoplasmic side. The short motif at 327 to 329 (YKV) is the PDZ-binding element.

This sequence belongs to the ephrin family. Interacts with TLE4 through the PDZ-binding motif. Post-translationally, inducible phosphorylation of tyrosine residues in the cytoplasmic domain. Tyrosine phosphorylation inhibits TLE4-binding. As to expression, expressed at low levels in most tissues with highest levels in the kidney, oocytes, ovary and testis.

The protein localises to the membrane. Its function is as follows. Cell surface transmembrane ligand for Eph receptors, a family of receptor tyrosine kinases which are crucial for migration, repulsion and adhesion during neuronal, vascular and epithelial development. Binds promiscuously Eph receptors residing on adjacent cells, leading to contact-dependent bidirectional signaling into neighboring cells. The signaling pathway downstream of the receptor is referred to as forward signaling while the signaling pathway downstream of the ephrin ligand is referred to as reverse signaling. May have a role in the developing mesenchymal and nervous tissue. The protein is Ephrin-B1 (efnb1) of Xenopus laevis (African clawed frog).